A 397-amino-acid chain; its full sequence is Beta-lactamase (397 aa).

An N-terminal signal peptide occupies residues 1–26 (MRDTRFPCLCGIAASTLLFATTPAIA). The Acyl-ester intermediate role is filled by Ser90. Positions 90, 146, 177, 179, and 370 each coordinate a beta-lactam. The active-site Proton acceptor is Tyr177.

The protein belongs to the class-C beta-lactamase family. Monomer.

The protein resides in the periplasm. The enzyme catalyses a beta-lactam + H2O = a substituted beta-amino acid. Functionally, class C beta-lactamase which confers resistance to penicillins and cephalosporins. Has nitrocefin-hydrolyzing activity. This chain is Beta-lactamase (ampC), found in Pseudomonas aeruginosa (strain ATCC 15692 / DSM 22644 / CIP 104116 / JCM 14847 / LMG 12228 / 1C / PRS 101 / PAO1).